Reading from the N-terminus, the 116-residue chain is Large ribosomal subunit protein bL20c (116 aa).

Belongs to the bacterial ribosomal protein bL20 family.

The protein resides in the plastid. Its subcellular location is the chloroplast. Binds directly to 23S ribosomal RNA and is necessary for the in vitro assembly process of the 50S ribosomal subunit. It is not involved in the protein synthesizing functions of that subunit. In Cyanidioschyzon merolae (strain NIES-3377 / 10D) (Unicellular red alga), this protein is Large ribosomal subunit protein bL20c.